A 585-amino-acid chain; its full sequence is 2-succinyl-5-enolpyruvyl-6-hydroxy-3-cyclohexene-1-carboxylate synthase (585 aa).

It belongs to the TPP enzyme family. MenD subfamily. As to quaternary structure, homodimer. It depends on Mg(2+) as a cofactor. Mn(2+) is required as a cofactor. Thiamine diphosphate serves as cofactor.

It carries out the reaction isochorismate + 2-oxoglutarate + H(+) = 5-enolpyruvoyl-6-hydroxy-2-succinyl-cyclohex-3-ene-1-carboxylate + CO2. It participates in quinol/quinone metabolism; 1,4-dihydroxy-2-naphthoate biosynthesis; 1,4-dihydroxy-2-naphthoate from chorismate: step 2/7. Its pathway is cofactor biosynthesis; phylloquinone biosynthesis. Its function is as follows. Catalyzes the thiamine diphosphate-dependent decarboxylation of 2-oxoglutarate and the subsequent addition of the resulting succinic semialdehyde-thiamine pyrophosphate anion to isochorismate to yield 2-succinyl-5-enolpyruvyl-6-hydroxy-3-cyclohexene-1-carboxylate (SEPHCHC). The chain is 2-succinyl-5-enolpyruvyl-6-hydroxy-3-cyclohexene-1-carboxylate synthase from Crocosphaera subtropica (strain ATCC 51142 / BH68) (Cyanothece sp. (strain ATCC 51142)).